The sequence spans 1148 residues: Envelopment polyprotein (1148 aa).

The first 23 residues, 1–23, serve as a signal peptide directing secretion; sequence MGKSSPVCLYLILQGLLLFDTVN. Topologically, residues 24–496 are lumenal; sequence AKNLNELKME…PGLHGWATVL (473 aa). Intrachain disulfides connect cysteine 34–cysteine 159, cysteine 68–cysteine 165, cysteine 117–cysteine 136, cysteine 141–cysteine 146, cysteine 183–cysteine 193, and cysteine 218–cysteine 257. Residue asparagine 142 is glycosylated (N-linked (GlcNAc...) asparagine; by host). N-linked (GlcNAc...) asparagine; by host glycosylation occurs at asparagine 357. Cystine bridges form between cysteine 386–cysteine 445, cysteine 390–cysteine 399, cysteine 415–cysteine 434, and cysteine 462–cysteine 485. The N-linked (GlcNAc...) asparagine; by host glycan is linked to asparagine 409. The helical transmembrane segment at 497 to 517 threads the bilayer; it reads LLLTFCFGWVLIPTITMILLK. The Cytoplasmic segment spans residues 518-637; sequence ILIAFAYLCS…LSLFRYRSRF (120 aa). Positions 526–543 are binding to the ribonucleoprotein; sequence CSKYNTDSKFRILVEKVK. 2 consecutive CCHC-type zinc fingers follow at residues 555 to 575 and 580 to 601; these read CEVC…RKSC and CPYC…FKVC. Binding to the ribonucleoprotein stretches follow at residues 598–615 and 621–635; these read FKVC…KKSL and MQGC…RYRS. The region spanning 621–644 is the ITAM domain; it reads MQGCYRTLSLFRYRSRFFVGLVWC. Positions 625 to 628 match the YxxL motif; sequence YRTL. The chain crosses the membrane as a helical span at residues 638–658; the sequence is FVGLVWCMLLVLELIVWAASA. The Lumenal segment spans residues 659 to 1115; that stretch reads ETQNLNDGWT…WVLGVLNGNW (457 aa). 8 disulfides stabilise this stretch: cysteine 745/cysteine 780, cysteine 749/cysteine 787, cysteine 761/cysteine 894, cysteine 775/cysteine 905, cysteine 790/cysteine 913, cysteine 816/cysteine 825, cysteine 833/cysteine 842, and cysteine 873/cysteine 877. The interval 767 to 787 is fusion loop; it reads YEYETGWGCNPPDCPGVGTGC. Residue asparagine 937 is glycosylated (N-linked (GlcNAc...) asparagine; by host). 5 disulfide bridges follow: cysteine 979/cysteine 1009, cysteine 1002/cysteine 1054, cysteine 1019/cysteine 1024, cysteine 1055/cysteine 1060, and cysteine 1094/cysteine 1098. Residues 1116 to 1136 traverse the membrane as a helical segment; sequence MVVAVLIALLILSIFLFALCC. The segment at 1131-1148 is binding to the ribonucleoprotein; that stretch reads LFALCCPRRPSYKKDHKP. The Cytoplasmic segment spans residues 1137–1148; the sequence is PRRPSYKKDHKP.

Belongs to the hantavirus envelope glycoprotein family. In terms of assembly, homodimer. Homotetramer; forms heterotetrameric Gn-Gc spikes in the pre-fusion conformation. Interacts (via C-terminus) with the nucleoprotein. Interacts with host TUFM; this interaction contributes to the virus-induced degradation of mitochondria by autophagy, which leads to degradation of host MAVS and inhibition of type I interferon (IFN) responses. Interacts with host MAP1LC3B; this interaction contributes to the virus-induced degradation of mitochondria by autophagy, which leads to degradation of host MAVS and inhibition of type I interferon (IFN) responses. Homodimer. Homotetramer; forms heterotetrameric Gn-Gc spikes in the pre-fusion conformation. Homotrimer; forms homotrimer in the post-fusion conformation at acidic pH. Interacts (via C-terminus) with the nucleoprotein. Envelope polyprotein precursor is quickly cleaved in vivo just after synthesis, presumably by host signal peptidase.

It is found in the virion membrane. The protein resides in the host cell surface. The protein localises to the host Golgi apparatus membrane. Its subcellular location is the host endoplasmic reticulum membrane. It localises to the host mitochondrion. In terms of biological role, forms homotetramers with glycoprotein C at the surface of the virion. Attaches the virion to host cell receptors including integrin ITGAV/ITGB3. This attachment induces virion internalization predominantly through clathrin-dependent endocytosis. Mediates the assembly and budding of infectious virus particles through its interaction with the nucleocapsid protein and the viral genome. May dysregulate normal immune and endothelial cell responses through an ITAM motif. Translocates to mitochondria, binds to host TUFM and recruits MAP1LC3B. These interactions induce mitochondrial autophagy and therefore destruction of host MAVS leading to inhibition of type I interferon (IFN) responses. Concomitant breakdown of glycoprotein N is apparently prevented by the nucleoprotein that may inhibit Gn-stimulated autophagosome-lysosome fusion. Interacts with the viral genomic RNA. Forms heterooctamers with glycoprotein N at the surface of the virion. Attaches the virion to host cell receptors including integrin ITGAV/ITGB3. This attachment induces virion internalization predominantly through clathrin-dependent endocytosis. Class II fusion protein that promotes fusion of viral membrane with host endosomal membrane after endocytosis of the virion. The protein is Envelopment polyprotein (GP) of Homo sapiens (Human).